An 861-amino-acid polypeptide reads, in one-letter code: Probable beta-glucosidase A (861 aa).

Positions 1–19 (MKLSILEAAALTAASVASA) are cleaved as a signal peptide. 3 N-linked (GlcNAc...) asparagine glycosylation sites follow: Asn-62, Asn-212, and Asn-253. Residue Asp-281 is part of the active site. Asn-316, Asn-323, Asn-355, Asn-524, Asn-543, Asn-565, Asn-669, and Asn-713 each carry an N-linked (GlcNAc...) asparagine glycan. Positions 735–754 (PEGATDGSPQPRLPASGGPG) are disordered.

It belongs to the glycosyl hydrolase 3 family.

It is found in the secreted. It carries out the reaction Hydrolysis of terminal, non-reducing beta-D-glucosyl residues with release of beta-D-glucose.. It participates in glycan metabolism; cellulose degradation. Its function is as follows. Beta-glucosidases are one of a number of cellulolytic enzymes involved in the degradation of cellulosic biomass. Catalyzes the last step releasing glucose from the inhibitory cellobiose. This chain is Probable beta-glucosidase A (bglA), found in Aspergillus terreus.